The primary structure comprises 358 residues: Type II restriction enzyme HpaII (358 aa).

Homodimer.

It catalyses the reaction Endonucleolytic cleavage of DNA to give specific double-stranded fragments with terminal 5'-phosphates.. Functionally, an E and P subtype restriction enzyme that recognizes the double-stranded sequence 5'-CCGG-3' and cleaves after C-1. The protein is Type II restriction enzyme HpaII of Haemophilus parainfluenzae.